A 90-amino-acid chain; its full sequence is uncharacterized protein (90 aa).

This is an uncharacterized protein from Bos taurus (Bovine).